We begin with the raw amino-acid sequence, 315 residues long: Methionyl-tRNA formyltransferase (315 aa).

(6S)-5,6,7,8-tetrahydrofolate is bound at residue 113–116 (SLLP).

It belongs to the Fmt family.

It carries out the reaction L-methionyl-tRNA(fMet) + (6R)-10-formyltetrahydrofolate = N-formyl-L-methionyl-tRNA(fMet) + (6S)-5,6,7,8-tetrahydrofolate + H(+). Attaches a formyl group to the free amino group of methionyl-tRNA(fMet). The formyl group appears to play a dual role in the initiator identity of N-formylmethionyl-tRNA by promoting its recognition by IF2 and preventing the misappropriation of this tRNA by the elongation apparatus. This chain is Methionyl-tRNA formyltransferase, found in Salmonella enteritidis PT4 (strain P125109).